Reading from the N-terminus, the 1230-residue chain is Protein transport protein Sec31A (1230 aa).

WD repeat units follow at residues 4–47 (KEID…EIFE), 64–111 (SSSH…AGDK), 120–160 (KHTG…TPMT), 166–206 (QPPE…PIIK), 209–254 (DHSN…SPLR), 258–298 (NHAR…VLYE), and 301–342 (TNTQ…DGLR). The interaction with SEC13 stretch occupies residues 161 to 470 (PGAKTQPPED…IEASQTEFEK (310 aa)). Residues 397 to 429 (SFSFGGKLVTFESVAVPLQQGAEQQRRQPVFIS) form a WD 8; interaction with SEC13 repeat. Arg-423 carries the asymmetric dimethylarginine modification. Residues Ser-526 and Ser-531 each carry the phosphoserine modification. A Glycyl lysine isopeptide (Lys-Gly) (interchain with G-Cter in ubiquitin) cross-link involves residue Lys-646. Disordered stretches follow at residues 789–905 (QGKP…ASNA) and 924–1104 (MYTA…PIGN). Ser-798 carries the phosphoserine modification. The interval 799–1123 (SQSPYERQPL…TEKITKKPIP (325 aa)) is interaction with PDCD6. The ALG-2-binding site motif-2 (ABS-2) motif lies at 841–847 (GFIMQGN). Residues 866 to 876 (QLPPYPQPQPY) are compositionally biased toward pro residues. Low complexity-rich tracts occupy residues 930–940 (ASSPTSSSAAS) and 959–975 (PSSSAYALPPGTTGTPP). Polar residues-rich tracts occupy residues 981-995 (PASQRTENQSFQDQA) and 1033-1064 (PIMNPSGDPQSQGLQQQPSTPGPLSSHASFPQ). A Phosphothreonine modification is found at Thr-1171. Ser-1173 is subject to Phosphoserine. Lys-1227 participates in a covalent cross-link: Glycyl lysine isopeptide (Lys-Gly) (interchain with G-Cter in ubiquitin).

This sequence belongs to the WD repeat SEC31 family. As to quaternary structure, COPII is composed of at least 5 proteins: the SEC23/24 complex, the SEC13/31 complex and SAR1. SEC13 and SEC31 make a 2:2 tetramer that forms the edge element of the COPII outer coat. The tetramer self-assembles in multiple copies to form the complete polyhedral cage. Interacts (via WD 8) with SEC13. Interacts with PDCD6; interaction takes place in response to cytosolic calcium increase and leads to bridge together the BCR(KLHL12) complex and SEC31A, leading to monoubiquitination. Interacts with KLHL12. Monoubiquitinated by the BCR(KLHL12) E3 ubiquitin ligase complex, leading to regulate the size of COPII coats.

The protein resides in the cytoplasm. It is found in the cytoplasmic vesicle. It localises to the COPII-coated vesicle membrane. Its subcellular location is the endoplasmic reticulum membrane. Its function is as follows. Component of the coat protein complex II (COPII) which promotes the formation of transport vesicles from the endoplasmic reticulum (ER). The coat has two main functions, the physical deformation of the endoplasmic reticulum membrane into vesicles and the selection of cargo molecules. This is Protein transport protein Sec31A (Sec31a) from Mus musculus (Mouse).